The sequence spans 143 residues: MPAAKKQIEEKPEVEQDLGAPDFSDLLDDDEKTLIDSVVNDDDESDELTDDAIGMAVGELVGMGVMFLTDYLAERRGEHWNVSTKELKQLAKAVDGSVPDTELSPAWALVAVSVGMFAPRVVVDIQLNKRKVIEVENDDKKAD.

Residues 1–14 (MPAAKKQIEEKPEV) are compositionally biased toward basic and acidic residues. Residues 1–25 (MPAAKKQIEEKPEVEQDLGAPDFSD) form a disordered region.

This is an uncharacterized protein from Pseudoalteromonas phage PM2 (Bacteriophage PM2).